Reading from the N-terminus, the 663-residue chain is DNA ligase (663 aa).

NAD(+) contacts are provided by residues 34 to 38 (DYEYD), 83 to 84 (SL), and E114. The N6-AMP-lysine intermediate role is filled by K116. Residues R137, E171, K286, and K310 each contribute to the NAD(+) site. 4 residues coordinate Zn(2+): C404, C407, C422, and C427. Residues 585-663 (TVESPLTGKN…ADEFIKLANG (79 aa)) enclose the BRCT domain.

The protein belongs to the NAD-dependent DNA ligase family. LigA subfamily. Mg(2+) is required as a cofactor. Requires Mn(2+) as cofactor.

It catalyses the reaction NAD(+) + (deoxyribonucleotide)n-3'-hydroxyl + 5'-phospho-(deoxyribonucleotide)m = (deoxyribonucleotide)n+m + AMP + beta-nicotinamide D-nucleotide.. In terms of biological role, DNA ligase that catalyzes the formation of phosphodiester linkages between 5'-phosphoryl and 3'-hydroxyl groups in double-stranded DNA using NAD as a coenzyme and as the energy source for the reaction. It is essential for DNA replication and repair of damaged DNA. This is DNA ligase from Brachyspira hyodysenteriae (strain ATCC 49526 / WA1).